We begin with the raw amino-acid sequence, 179 residues long: Transcription factor NF-E4 (179 aa).

Residue lysine 43 is modified to N6-acetyllysine. Residues 100–179 are disordered; it reads AMKATGPHNA…QLPSLHLSQG (80 aa). 2 stretches are compositionally biased toward polar residues: residues 143–153 and 163–179; these read LSQSNPPTRIS and ALEQ…LSQG.

In terms of assembly, component of the SSP (stage selector protein) complex, which appears to be a heteromer of TFCP2 and 2 copies of NFE4. Interacts with HDAC1 and PCAF. Isoform 2 interacts with TFCP2. Post-translationally, acetylation at Lys-43 prolongs the protein half-life by preventing ubiquitin-mediated degradation and reduces the interaction between NF-E4 and HDAC1, potentially maximizing the activating ability of the factor at the gamma-promoter. In terms of processing, ubiquitinated; leading to its degradation by the proteasome. Acetylation at Lys-43 prevents ubiquitination. In terms of tissue distribution, specifically expressed in fetal liver, cord blood and bone marrow. Also expressed in the K562 and HEL cell lines, which constitutively express the fetal globin genes.

Its subcellular location is the nucleus. Functionally, functions as part of the SSP (stage selector protein) complex, a complex that contributes to the preferential expression of the gamma-gene in fetal erythroid cells by facilitating the interaction of the gamma-globin genes with enhancer elements contained in the locus control region (LCR). The complex binds to the stage selector element (SSE) in the proximal gamma-globin promoter. In contrast, isoform 2 acts as a repressor of gamma-globin gene expression by preventing NFE2 and RNA polymerase II recruitment to the promoter. The chain is Transcription factor NF-E4 (NFE4) from Homo sapiens (Human).